Reading from the N-terminus, the 131-residue chain is Thioredoxin H4-1 (131 aa).

The Thioredoxin domain maps to 3-129 (SCVGKERSDE…LEKKVAALAD (127 aa)). Residues C55 and C58 each act as nucleophile in the active site. C55 and C58 form a disulfide bridge.

Belongs to the thioredoxin family. Plant H-type subfamily.

Its subcellular location is the cytoplasm. Probable thiol-disulfide oxidoreductase that may be involved in the redox regulation of a number of cytosolic enzymes. This chain is Thioredoxin H4-1, found in Oryza sativa subsp. japonica (Rice).